Reading from the N-terminus, the 123-residue chain is MPTISQLVRKGREKLLTKKKAPALKESPQKRGVCTRVYTTTPKKPNSALRKVARVRLTNGFEVTSYIPGVGHNLQEHSVVLIRGGRVKDLPGVRYHIVRGTLDAVGVQGRKQGRSKYGAKRPS.

Asp-89 is subject to 3-methylthioaspartic acid.

The protein belongs to the universal ribosomal protein uS12 family. As to quaternary structure, part of the 30S ribosomal subunit. Contacts proteins S8 and S17. May interact with IF1 in the 30S initiation complex.

With S4 and S5 plays an important role in translational accuracy. Its function is as follows. Interacts with and stabilizes bases of the 16S rRNA that are involved in tRNA selection in the A site and with the mRNA backbone. Located at the interface of the 30S and 50S subunits, it traverses the body of the 30S subunit contacting proteins on the other side and probably holding the rRNA structure together. The combined cluster of proteins S8, S12 and S17 appears to hold together the shoulder and platform of the 30S subunit. This Anaeromyxobacter sp. (strain Fw109-5) protein is Small ribosomal subunit protein uS12.